The sequence spans 646 residues: MVMYARKQQRLSDGCHDRRGDSQPFQALKYSSKSHPSSGDHRHEKMRDAADPSPPNKMLRRSNSPENKYSDSTGHNKAKNVHTQRVRERDGGTSYSPQENSHNHSALHSSNSHSSNPSNNPSKTSDAPYDSADDWSEHISSSGKKYYYNCRTEVSQWEKPKEWLEREQRQKEANKLAVNSFPKDRDYRREVMQATATSGFTSGMEDKHSSDASSLLPQNILSQTSRHNDKDYRLPRAETHSSSTPVQHPIKPVVHPTATPSTVPSSPFTLQSDHQPKKSFDANGASTLSKLPTPTASLPAQKTERKESAPGDKSISHSCTTPSTSSASGLNPTSAPPTSASAVPVSPVPQSTIPPLLQDPNLFRQLLPALQATLQLNNSNVDISKINEVLTAAVTQASLQSIIHKFLTAGPSAFNITSLISQAAQLSTQAQPSNQSPMSLTSDASSPRSYVSPRISTPQTNTVPMKPLISTPPVSSQPKVSTPVVKQGPVSHSATQQPVTADKQQSHDPVSPRSLQRLSSQRSPSPGPNHTCSSNASTATVVPQNASARPACSLTPTLAAHFNDNLIKHVQGWPADHAEKQASRLREEAHNMGSVHMSEICTELKNLRSLVRVCEIQATLREQRILFLRQQIKELEKLKNQNSFMV.

The tract at residues 1–138 is disordered; that stretch reads MVMYARKQQR…YDSADDWSEH (138 aa). A compositionally biased stretch (polar residues) spans 23–37; sequence QPFQALKYSSKSHPS. Basic and acidic residues predominate over residues 38-50; sequence SGDHRHEKMRDAA. S53 is subject to Phosphoserine. A compositionally biased stretch (polar residues) spans 61–75; it reads RSNSPENKYSDSTGH. The segment covering 103–122 has biased composition (low complexity); that stretch reads NHSALHSSNSHSSNPSNNPS. The region spanning 129 to 162 is the WW domain; that stretch reads YDSADDWSEHISSSGKKYYYNCRTEVSQWEKPKE. Phosphoserine occurs at positions 131 and 142. Composition is skewed to basic and acidic residues over residues 158–174 and 182–191; these read EKPKEWLEREQRQKEAN and PKDRDYRREV. Disordered stretches follow at residues 158-352 and 428-541; these read EKPK…PQST and TQAQ…TATV. A compositionally biased stretch (polar residues) spans 211–225; it reads DASSLLPQNILSQTS. S225 carries the post-translational modification Phosphoserine. Residues 226–239 are compositionally biased toward basic and acidic residues; that stretch reads RHNDKDYRLPRAET. Over residues 252-267 the composition is skewed to low complexity; the sequence is PVVHPTATPSTVPSSP. Polar residues predominate over residues 284–300; that stretch reads GASTLSKLPTPTASLPA. A Phosphothreonine modification is found at T293. N6-acetyllysine is present on K302. Over residues 316–331 the composition is skewed to polar residues; it reads SHSCTTPSTSSASGLN. The span at 332-351 shows a compositional bias: low complexity; sequence PTSAPPTSASAVPVSPVPQS. Residues 428–463 are compositionally biased toward polar residues; it reads TQAQPSNQSPMSLTSDASSPRSYVSPRISTPQTNTV. S446 is modified (phosphoserine). Position 471 is a phosphothreonine (T471). The span at 490–503 shows a compositional bias: polar residues; the sequence is VSHSATQQPVTADK. A phosphoserine mark is found at S511, S523, and S525. Low complexity predominate over residues 511–524; it reads SPRSLQRLSSQRSP. A compositionally biased stretch (polar residues) spans 528–541; that stretch reads PNHTCSSNASTATV. The stretch at 617–643 forms a coiled coil; the sequence is QATLREQRILFLRQQIKELEKLKNQNS.

As to quaternary structure, interacts (via coiled coil domain) with RNF20, RNF40 and UBE2A. Interacts (via WW domain) with RNA polymerase II. Interacts with MTOR and other components of the MTOR pathway including RPTOR, RUVBL1, RUVBL2, TTI1 and TTI2. In terms of processing, phosphorylated on tyrosine residues.

Its subcellular location is the nucleus speckle. The protein localises to the nucleus. Functionally, acts as a linker between gene transcription and histone H2B monoubiquitination at 'Lys-120' (H2BK120ub1). Interacts with the RNA polymerase II transcriptional machinery via its WW domain and with RNF20-RNF40 via its coiled coil region, thereby linking and regulating H2BK120ub1 and gene transcription. Regulates the cell-cycle checkpoint activation in response to DNA damage. Positive regulator of amino acid starvation-induced autophagy. Also acts as a negative regulator of basal autophagy. Positively regulates MTOR activity by promoting, in an energy-dependent manner, the assembly of the TTT complex composed of TELO2, TTI1 and TTI2 and the RUVBL complex composed of RUVBL1 and RUVBL2 into the TTT-RUVBL complex. This leads to the dimerization of the mTORC1 complex and its subsequent activation. May negatively regulate the ubiquitin proteasome pathway. This chain is WW domain-containing adapter protein with coiled-coil (Wac), found in Mus musculus (Mouse).